The chain runs to 551 residues: FGGY carbohydrate kinase domain-containing protein (551 aa).

This sequence belongs to the FGGY kinase family. Expressed in kidney, lung and small intestine and to a lower extent in liver and detected in cerebrospinal fluid (at protein level).

It carries out the reaction D-ribulose + ATP = D-ribulose 5-phosphate + ADP + H(+). Its pathway is carbohydrate metabolism; pentose and glucuronate interconversion. Catalyzes ATP-dependent phosphorylation of D-ribulose at C-5 to form D-ribulose 5-phosphate. Postulated to function in a metabolite repair mechanism by preventing toxic accumulation of free D-ribulose formed by non-specific phosphatase activities. Alternatively, may play a role in regulating D-ribulose 5-phosphate recycling in the pentose phosphate pathway. Can phosphorylate ribitol with low efficiency. This chain is FGGY carbohydrate kinase domain-containing protein, found in Homo sapiens (Human).